Here is an 88-residue protein sequence, read N- to C-terminus: Small cysteine-rich outer membrane protein OmcA (88 aa).

The N-terminal stretch at 1–18 is a signal peptide; it reads MKKTALLAALCSVVSLSS. Residue cysteine 19 is the site of N-palmitoyl cysteine attachment. Cysteine 19 carries S-diacylglycerol cysteine lipidation.

Part of a disulfide cross-linked outer membrane complex (COMC) composed of the major outer membrane porin (MOMP), the small cysteine-rich protein (OmcA) and the large cysteine-rich periplasmic protein (OmcB).

The protein localises to the cell outer membrane. In elementary bodies (EBs, the infectious stage, which is able to survive outside the host cell) provides the structural integrity of the outer envelope through disulfide cross-links with the large cysteine-rich periplasmic protein and the major outer membrane porin. It has been described in publications as the Sarkosyl-insoluble COMC (Chlamydia outer membrane complex), and serves as the functional equivalent of peptidoglycan. The protein is Small cysteine-rich outer membrane protein OmcA (omcA) of Chlamydia trachomatis serovar B (strain Jali20/OT).